A 106-amino-acid chain; its full sequence is Small ribosomal subunit protein uS10 (106 aa).

The protein belongs to the universal ribosomal protein uS10 family. Part of the 30S ribosomal subunit.

In terms of biological role, involved in the binding of tRNA to the ribosomes. The protein is Small ribosomal subunit protein uS10 of Prochlorococcus marinus (strain MIT 9515).